We begin with the raw amino-acid sequence, 246 residues long: Complement C1q tumor necrosis factor-related protein 3 (246 aa).

Positions 1–22 (MLGRQRIWWHLLPLLFLPFCLC) are cleaved as a signal peptide. One can recognise a Collagen-like domain in the interval 51-113 (GYQGPPGPPG…KGEKGYPGVP (63 aa)). The disordered stretch occupies residues 53 to 112 (QGPPGPPGPPGIPGNHGNNGNNGATGHEGAKGEKGDKGDLGPRGERGQHGPKGEKGYPGV). Pro residues predominate over residues 55–64 (PPGPPGPPGI). The span at 65 to 74 (PGNHGNNGNN) shows a compositional bias: low complexity. The span at 80 to 107 (EGAKGEKGDKGDLGPRGERGQHGPKGEK) shows a compositional bias: basic and acidic residues. Residues 113–246 (PPELQIAFMA…FAGFLLFETK (134 aa)) form the C1q domain.

It localises to the secreted. This is Complement C1q tumor necrosis factor-related protein 3 (C1qtnf3) from Mus musculus (Mouse).